The primary structure comprises 212 residues: Imidazole glycerol phosphate synthase subunit HisH (212 aa).

Residues 3–212 (TVAVIDYGMG…QNFIAWDGRW (210 aa)) enclose the Glutamine amidotransferase type-1 domain. Cysteine 81 (nucleophile) is an active-site residue. Residues histidine 190 and glutamate 192 contribute to the active site.

Heterodimer of HisH and HisF.

Its subcellular location is the cytoplasm. The catalysed reaction is 5-[(5-phospho-1-deoxy-D-ribulos-1-ylimino)methylamino]-1-(5-phospho-beta-D-ribosyl)imidazole-4-carboxamide + L-glutamine = D-erythro-1-(imidazol-4-yl)glycerol 3-phosphate + 5-amino-1-(5-phospho-beta-D-ribosyl)imidazole-4-carboxamide + L-glutamate + H(+). The enzyme catalyses L-glutamine + H2O = L-glutamate + NH4(+). It functions in the pathway amino-acid biosynthesis; L-histidine biosynthesis; L-histidine from 5-phospho-alpha-D-ribose 1-diphosphate: step 5/9. Its function is as follows. IGPS catalyzes the conversion of PRFAR and glutamine to IGP, AICAR and glutamate. The HisH subunit catalyzes the hydrolysis of glutamine to glutamate and ammonia as part of the synthesis of IGP and AICAR. The resulting ammonia molecule is channeled to the active site of HisF. This Pseudomonas putida (strain ATCC 47054 / DSM 6125 / CFBP 8728 / NCIMB 11950 / KT2440) protein is Imidazole glycerol phosphate synthase subunit HisH.